The following is a 410-amino-acid chain: WD repeat and FYVE domain-containing protein 1 (410 aa).

6 WD repeats span residues 22–61, 66–105, 112–150, 153–192, 197–236, and 240–279; these read GHQD…QYWP, TMAS…NKMN, AHQN…NMLG, FFSS…CSVI, GHEG…GRTL, and GHHD…EEAP. The FYVE-type zinc-finger motif lies at 281–352; the sequence is WLESDSCQKC…VCDSCYDSIK (72 aa). 8 residues coordinate Zn(2+): Cys287, Cys290, Cys314, Cys317, Cys322, Cys325, Cys344, and Cys347. The WD 7 repeat unit spans residues 364–403; it reads EGKHNISHMSMDVARGLMVTCGTDRVVKIWDMTPVVGCSL. Residue Ser408 is modified to Phosphoserine.

As to quaternary structure, binds PtdIns3P in vitro with high specificity over other phosphoinositides. Interacts (via WD repeat 2) with tyrosine-phosphorylated TLR3 (via TIR domain) in response to poly(I:C). Interacts with TLR4 in response to LPS. Interacts with TICAM1 in response to poly(I:C).

It is found in the early endosome. Positively regulates TLR3- and TLR4-mediated signaling pathways by bridging the interaction between TLR3 or TLR4 and TICAM1. Promotes TLR3/4 ligand-induced activation of transcription factors IRF3 and NF-kappa-B, as well as the production of IFN-beta and inflammatory cytokines. The chain is WD repeat and FYVE domain-containing protein 1 (WDFY1) from Bos taurus (Bovine).